The following is a 536-amino-acid chain: Quinate permease (536 aa).

The Cytoplasmic portion of the chain corresponds to 1 to 26 (MTLLALKEDRPTPKAVYNWRVYTCAA). Residues 27–47 (IASFASCMIGYDSAFIGTTLA) form a helical membrane-spanning segment. The Extracellular portion of the chain corresponds to 48–74 (LPSFKKEFDFASYTPGALALLQSNIVS). The chain crosses the membrane as a helical span at residues 75 to 95 (VYQAGAFFGSLFAFATSYFLG). Over 96-98 (RRK) the chain is Cytoplasmic. A helical transmembrane segment spans residues 99–119 (SLIAFSVVFIIGAAIMLAADG). Residues 120–131 (QGRGIAPIIAGR) lie on the Extracellular side of the membrane. A helical membrane pass occupies residues 132–152 (VLAGIGVGGASNMVPIYISEL). Topologically, residues 153–160 (APPAVRGR) are cytoplasmic. Residues 161 to 181 (LVGIYELGWQIGGLVGFWINY) traverse the membrane as a helical segment. Residues 182–195 (GVNTTMAPTRSQWL) are Extracellular-facing. N-linked (GlcNAc...) asparagine glycosylation occurs at N184. A helical membrane pass occupies residues 196 to 216 (IPFAVQLIPAGLLFLGSFWIP). The Cytoplasmic portion of the chain corresponds to 217-285 (ESPRWLFANG…SLKQRKVQWR (69 aa)). The helical transmembrane segment at 286-306 (FFLGGMLFLWQNGSGINAINY) threads the bilayer. Residues 307–327 (YSPTVFRSIGITGTNTGFLTT) lie on the Extracellular side of the membrane. A helical transmembrane segment spans residues 328–349 (GIFGVVKMVLTIVWLLWLVDLV). Residues 350-352 (GRR) lie on the Cytoplasmic side of the membrane. The helical transmembrane segment at 353 to 373 (RMLFIGATGGSLCMWFIGAYI) threads the bilayer. The Extracellular portion of the chain corresponds to 374 to 389 (KIAGPGSTKAEDAKLT). Residues 390 to 410 (SGGIAAIFFFYLWTAFYTPSW) form a helical membrane-spanning segment. Topologically, residues 411–435 (NGTPWVINSEMFDQNTRSLGQASAA) are cytoplasmic. The helical transmembrane segment at 436 to 456 (ANNWFWNFIISRFTPQMFIKM) threads the bilayer. Over 457-458 (EY) the chain is Extracellular. A helical transmembrane segment spans residues 459 to 479 (GVYFFFASLMLLSIVFIYFFI). Residues 480–536 (PETKSIPLEAMDRLFEIKPVHNANKILMAELNFDRNPEREESSLDEKDRVTQTENAV) are Cytoplasmic-facing. Over residues 516 to 530 (PEREESSLDEKDRVT) the composition is skewed to basic and acidic residues. Positions 516–536 (PEREESSLDEKDRVTQTENAV) are disordered.

Belongs to the major facilitator superfamily. Sugar transporter (TC 2.A.1.1) family.

It localises to the membrane. This chain is Quinate permease (qa-y), found in Neurospora terricola.